The chain runs to 755 residues: Polyribonucleotide nucleotidyltransferase (755 aa).

D482 and D488 together coordinate Mg(2+). Positions 549-608 (PRMVSFYIDKDKISAAIGAKGKNIRSVCERSNAKIEIGDDGKVSVFAMSSAEAEIAKNMM) constitute a KH domain. One can recognise an S1 motif domain in the interval 618-686 (GAIVDVKVVK…KGGCPKLSRR (69 aa)). Over residues 702–714 (NEEKKDSSNDRDY) the composition is skewed to basic and acidic residues. Residues 702–755 (NEEKKDSSNDRDYYNSPFNRKSGHRKRPVHSRSSFSNRNNRPKFGNDDSSSSFY) are disordered. Basic residues predominate over residues 722–731 (KSGHRKRPVH).

This sequence belongs to the polyribonucleotide nucleotidyltransferase family. The cofactor is Mg(2+).

It is found in the cytoplasm. It catalyses the reaction RNA(n+1) + phosphate = RNA(n) + a ribonucleoside 5'-diphosphate. Involved in mRNA degradation. Catalyzes the phosphorolysis of single-stranded polyribonucleotides processively in the 3'- to 5'-direction. The polypeptide is Polyribonucleotide nucleotidyltransferase (Wolbachia sp. subsp. Brugia malayi (strain TRS)).